Reading from the N-terminus, the 157-residue chain is 6,7-dimethyl-8-ribityllumazine synthase 1 (157 aa).

5-amino-6-(D-ribitylamino)uracil-binding positions include F22, 53–55 (ALE), and 82–84 (TVI). 87-88 (ET) contributes to the (2S)-2-hydroxy-3-oxobutyl phosphate binding site. H90 functions as the Proton donor in the catalytic mechanism. 5-amino-6-(D-ribitylamino)uracil is bound at residue N115. R129 contributes to the (2S)-2-hydroxy-3-oxobutyl phosphate binding site.

It belongs to the DMRL synthase family. As to quaternary structure, homopentamer.

The catalysed reaction is (2S)-2-hydroxy-3-oxobutyl phosphate + 5-amino-6-(D-ribitylamino)uracil = 6,7-dimethyl-8-(1-D-ribityl)lumazine + phosphate + 2 H2O + H(+). It participates in cofactor biosynthesis; riboflavin biosynthesis; riboflavin from 2-hydroxy-3-oxobutyl phosphate and 5-amino-6-(D-ribitylamino)uracil: step 1/2. Catalyzes the formation of 6,7-dimethyl-8-ribityllumazine by condensation of 5-amino-6-(D-ribitylamino)uracil with 3,4-dihydroxy-2-butanone 4-phosphate. This is the penultimate step in the biosynthesis of riboflavin. The sequence is that of 6,7-dimethyl-8-ribityllumazine synthase 1 (ribH1) from Brucella melitensis biotype 1 (strain ATCC 23456 / CCUG 17765 / NCTC 10094 / 16M).